Reading from the N-terminus, the 505-residue chain is Alpha-ketoglutarate-dependent dioxygenase FTO (505 aa).

Thr-4 carries the post-translational modification Phosphothreonine. A fe2OG dioxygenase domain region spans residues 32–327 (TPKDDEFYQQ…SSTHRVAECS (296 aa)). Residues Arg-96 and Tyr-108 each contribute to the substrate site. Asn-205 contacts 2-oxoglutarate. Residues 213-224 (PYLKEEPYFGMG) are loop L1; predicted to block binding of double-stranded DNA or RNA. Lys-216 carries the post-translational modification N6-acetyllysine. Fe cation is bound by residues His-231 and Asp-233. A substrate-binding site is contributed by 231–234 (HHDE). Tyr-295 contacts 2-oxoglutarate. Fe cation is bound at residue His-307. 2-oxoglutarate is bound by residues 316–318 (RFS), Thr-320, and Arg-322.

This sequence belongs to the fto family. Monomer. May also exist as homodimer. The cofactor is Fe(2+).

It localises to the nucleus. Its subcellular location is the nucleus speckle. It is found in the cytoplasm. The enzyme catalyses a 5'-end (N(7)-methyl 5'-triphosphoguanosine)-(N(6),2'-O-dimethyladenosine) in mRNA + 2-oxoglutarate + O2 = a 5'-end (N(7)-methyl 5'-triphosphoguanosine)-(2'-O-methyladenosine) in mRNA + formaldehyde + succinate + CO2. The catalysed reaction is an N(6)-methyladenosine in mRNA + 2-oxoglutarate + O2 = an adenosine in mRNA + formaldehyde + succinate + CO2. It catalyses the reaction N(6)-methyladenosine in U6 snRNA + 2-oxoglutarate + O2 = adenosine in U6 snRNA + formaldehyde + succinate + CO2. It carries out the reaction a 5'-end (N(7)-methyl 5'-triphosphoguanosine)-(N(6),2'-O-dimethyladenosine) in U6 snRNA + 2-oxoglutarate + O2 = a 5'-end (N(7)-methyl 5'-triphosphoguanosine)-(2'-O-methyladenosine) in U6 snRNA + formaldehyde + succinate + CO2. The enzyme catalyses an N(1)-methyladenosine in tRNA + 2-oxoglutarate + O2 = an adenosine in tRNA + formaldehyde + succinate + CO2. With respect to regulation, activated by ascorbate. Inhibited by N-oxalylglycine, fumarate and succinate. Functionally, RNA demethylase that mediates oxidative demethylation of different RNA species, such as mRNAs, tRNAs and snRNAs, and acts as a regulator of fat mass, adipogenesis and energy homeostasis. Specifically demethylates N(6)-methyladenosine (m6A) RNA, the most prevalent internal modification of messenger RNA (mRNA) in higher eukaryotes. M6A demethylation by FTO affects mRNA expression and stability. Also able to demethylate m6A in U6 small nuclear RNA (snRNA). Mediates demethylation of N(6),2'-O-dimethyladenosine cap (m6A(m)), by demethylating the N(6)-methyladenosine at the second transcribed position of mRNAs and U6 snRNA. Demethylation of m6A(m) in the 5'-cap by FTO affects mRNA stability by promoting susceptibility to decapping. Also acts as a tRNA demethylase by removing N(1)-methyladenine from various tRNAs. Has no activity towards 1-methylguanine. Has no detectable activity towards double-stranded DNA. Also able to repair alkylated DNA and RNA by oxidative demethylation: demethylates single-stranded RNA containing 3-methyluracil, single-stranded DNA containing 3-methylthymine and has low demethylase activity towards single-stranded DNA containing 1-methyladenine or 3-methylcytosine. Ability to repair alkylated DNA and RNA is however unsure in vivo. Involved in the regulation of fat mass, adipogenesis and body weight, thereby contributing to the regulation of body size and body fat accumulation. Involved in the regulation of thermogenesis and the control of adipocyte differentiation into brown or white fat cells. Regulates activity of the dopaminergic midbrain circuitry via its ability to demethylate m6A in mRNAs. In Pongo abelii (Sumatran orangutan), this protein is Alpha-ketoglutarate-dependent dioxygenase FTO.